The primary structure comprises 568 residues: Putative DEAD-box RNA helicase HEL64 (568 aa).

Residues 1 to 34 form a disordered region; sequence MEETYSPFTGRQGQYNQGYNGGGRRDSRGGMGER. Basic and acidic residues predominate over residues 23–34; sequence GRRDSRGGMGER. The short motif at 102–130 is the Q motif element; that stretch reads FDHLCGIVPPYLLKKLTAQNFTAPTPVQA. Residues 133–307 form the Helicase ATP-binding domain; that stretch reads WPVLLSGRDL…AEFQKQWIRI (175 aa). 146-153 contacts ATP; that stretch reads AKTGSGKT. The short motif at 255 to 258 is the DEAD box element; sequence DEAD. In terms of domain architecture, Helicase C-terminal spans 335 to 483; that stretch reads ELRKLMQEHR…EIPDWMIEWN (149 aa).

This sequence belongs to the DEAD box helicase family. DDX5/DBP2 subfamily.

It localises to the nucleus. It carries out the reaction ATP + H2O = ADP + phosphate + H(+). In Trypanosoma brucei brucei, this protein is Putative DEAD-box RNA helicase HEL64 (HEL64).